The primary structure comprises 201 residues: Heat shock protein beta-1 (201 aa).

Ser-15 carries the phosphoserine; by PKA and PKC modification. Positions Ala-83 to Glu-193 constitute a sHSP domain.

It belongs to the small heat shock protein (HSP20) family. Homooligomer. Homodimer; becomes monomeric upon activation. Heterooligomer.

It localises to the cytoplasm. The protein resides in the nucleus. It is found in the cytoskeleton. The protein localises to the spindle. Its function is as follows. Small heat shock protein which functions as a molecular chaperone probably maintaining denatured proteins in a folding-competent state. Plays a role in stress resistance and actin organization. This chain is Heat shock protein beta-1 (hspb1), found in Poeciliopsis lucida (Desert topminnow).